Consider the following 773-residue polypeptide: Mitochondrial inner membrane m-AAA protease component yta12 (773 aa).

Positions 83-119 (FSVTSKRSQNGSSGSNSDANGRKNGQKNDDSKKKGLN) are disordered. Residues 87-101 (SKRSQNGSSGSNSDA) show a composition bias toward low complexity. The next 2 helical transmembrane spans lie at 126–146 (VFEIALNGNTILGGILVAYIL) and 239–259 (VLATLLSFAPTLLIIGSVIYL). 8 residues coordinate ATP: V298, A299, T340, G341, K342, T343, L344, and H479. H561 contributes to the Zn(2+) binding site. Residue E562 is part of the active site. Zn(2+) is bound by residues H565 and D638. The segment at 752–773 (EYKNDHDPRNPPIPPSPQQPSA) is disordered. The span at 761 to 773 (NPPIPPSPQQPSA) shows a compositional bias: pro residues.

The protein in the N-terminal section; belongs to the AAA ATPase family. It in the C-terminal section; belongs to the peptidase M41 family. In terms of assembly, component of the m-AAA protease complex. The cofactor is Zn(2+).

The protein resides in the mitochondrion membrane. The enzyme catalyses ATP + H2O = ADP + phosphate + H(+). Functionally, catalytic component of the m-AAA protease, a protease that plays a key role in proteostasis of inner mitochondrial membrane proteins. Possesses both ATPase and protease activities: the ATPase activity is required to unfold substrates, threading them into the internal proteolytic cavity for hydrolysis into small peptide fragments. The complex is necessary for the assembly of mitochondrial respiratory chain and ATPase complexes. The m-AAA protease carries out protein quality control in the inner membrane of the mitochondria by mediating degradation of mistranslated or misfolded polypeptides. It also mediates protein maturation of the mitochondrial ribosomal subunit mrpl32/bL32m by catalyzing the cleavage of the presequence of mrpl32/bL32m prior to assembly into the mitochondrial ribosome. Also acts as a membrane protein dislocase: required to dislocate moderately hydrophobic transmembrane segments from the membrane. The chain is Mitochondrial inner membrane m-AAA protease component yta12 (yta12) from Schizosaccharomyces pombe (strain 972 / ATCC 24843) (Fission yeast).